A 1214-amino-acid chain; its full sequence is Transient receptor potential cation channel subfamily M member 4 (1214 aa).

The Cytoplasmic segment spans residues 1-782 (MVVPEKEQSW…FHFWGAPVTI (782 aa)). R171, R214, and L225 together coordinate ATP. Residues D270, A392, D395, and E396 each coordinate Ca(2+). ATP is bound by residues R421 and G448. A helical transmembrane segment spans residues 783 to 803 (FMGNVVSYLLFLLLFSRVLLV). Residues 804–814 (DFQPAPPGSLE) are Extracellular-facing. Residues 815 to 835 (LLLYFWAFTLLCEELRQGLSG) form a helical membrane-spanning segment. E828 and Q831 together coordinate Ca(2+). The Cytoplasmic segment spans residues 836–863 (GGGSLASGGPGPGHASLSQRLRLYLADS). A helical transmembrane segment spans residues 864–884 (WNQCDLVALTCFLLGVGCRLT). Ca(2+)-binding residues include N865 and D868. At 885–886 (PG) the chain is on the extracellular side. Residues 887 to 910 (LYHLGRTVLCIDFMVFTVRLLHIF) traverse the membrane as a helical segment. Over 911–930 (TVNKQLGPKIVIVSKMMKDV) the chain is Cytoplasmic. Residues 931–951 (FFFLFFLGVWLVAYGVATEGL) traverse the membrane as a helical segment. Over 952–963 (LRPRDSDFPSIL) the chain is Extracellular. Residues 964–984 (RRVFYRPYLQIFGQIPQEDMD) constitute an intramembrane region (pore-forming). The Selectivity filter signature appears at 975–977 (FGQ). Topologically, residues 985-1019 (VALMEHSNCSSEPGFWAHPPGAQAGTCVSQYANWL) are extracellular. A glycan (N-linked (GlcNAc...) asparagine) is linked at N992. Residues C993 and C1011 are joined by a disulfide bond. A helical transmembrane segment spans residues 1020-1040 (VVLLLVIFLLVANILLVNLLI). The Cytoplasmic segment spans residues 1041-1214 (AMFSYTFGKV…PPPDLPGSKD (174 aa)). Positions 1076-1176 (APPFIVISHL…EYEQRLKVLE (101 aa)) are calmodulin-binding. Residues 1134–1187 (LARARDKRESDSERLKRTSQKVDLALKQLGHIREYEQRLKVLEREVQQCSRVLG) are a coiled coil. Positions 1136–1141 (RARDKR) are mediates modulation by decavanadate and PIP2-binding. Residues S1145 and S1152 each carry the phosphoserine; by PKC modification.

The protein belongs to the transient receptor (TC 1.A.4) family. LTrpC subfamily. TRPM4 sub-subfamily. In terms of assembly, homotetramer. Post-translationally, phosphorylation by PKC leads to increase the sensitivity to Ca(2+). In terms of processing, sumoylated. Desumoylated by SENP1. In terms of tissue distribution, widely expressed with a high expression in intestine and prostate. In brain, it is both expressed in whole cerebral arteries and isolated vascular smooth muscle cells. Prominently expressed in Purkinje fibers. Expressed at higher levels in T-helper 2 (Th2) cells as compared to T-helper 1 (Th1) cells. Expressed in keratocytes.

Its subcellular location is the cell membrane. It localises to the endoplasmic reticulum. The protein localises to the golgi apparatus. It catalyses the reaction Na(+)(in) = Na(+)(out). The catalysed reaction is K(+)(in) = K(+)(out). Its activity is regulated as follows. Displays weak voltage dependence, and repressed by decavanadate. Calmodulin-binding confers the Ca(2+) sensitivity. ATP is able to restore Ca(2+) sensitivity after desensitization. ATP inhibits channel activity. Phosphatidylinositol 4,5-bisphosphate (PIP2)-binding strongly enhances activity, by increasing the channel's Ca(2+) sensitivity and shifting its voltage dependence of activation towards negative potentials. Activity is also enhanced by 3,5-bis(trifluoromethyl)pyrazole derivative (BTP2). Exhibits pronounced temperature sensitivity, with activities strongly intensifying near physiological temperatures. Calcium-activated selective cation channel that mediates membrane depolarization. While it is activated by increase in intracellular Ca(2+), it is impermeable to it. Mediates transport of monovalent cations (Na(+) &gt; K(+) &gt; Cs(+) &gt; Li(+)), leading to depolarize the membrane. It thereby plays a central role in cadiomyocytes, neurons from entorhinal cortex, dorsal root and vomeronasal neurons, endocrine pancreas cells, kidney epithelial cells, cochlea hair cells etc. Participates in T-cell activation by modulating Ca(2+) oscillations after T lymphocyte activation, which is required for NFAT-dependent IL2 production. Involved in myogenic constriction of cerebral arteries. Controls insulin secretion in pancreatic beta-cells. May also be involved in pacemaking or could cause irregular electrical activity under conditions of Ca(2+) overload. Affects T-helper 1 (Th1) and T-helper 2 (Th2) cell motility and cytokine production through differential regulation of calcium signaling and NFATC1 localization. Enhances cell proliferation through up-regulation of the beta-catenin signaling pathway. Plays a role in keratinocyte differentiation. Its function is as follows. Lacks channel activity. In Homo sapiens (Human), this protein is Transient receptor potential cation channel subfamily M member 4.